The following is a 290-amino-acid chain: Glucuronoxylan 4-O-methyltransferase 2 (290 aa).

Residues 8-28 (FISSKLIFICCSILVLFILFL) form a helical membrane-spanning segment.

The protein belongs to the methyltransferase superfamily. As to expression, expressed in roots, rosette leaves and stems.

The protein localises to the golgi apparatus membrane. It carries out the reaction glucuronoxylan D-glucuronate + n S-adenosyl-L-methionine = glucuronoxylan 4-O-methyl-D-glucuronate + n S-adenosyl-L-homocysteine + n H(+). Its function is as follows. Methyltransferase catalyzing 4-O-methylation of glucuronic acid side chains on xylan. This chain is Glucuronoxylan 4-O-methyltransferase 2 (GXM2), found in Arabidopsis thaliana (Mouse-ear cress).